We begin with the raw amino-acid sequence, 186 residues long: MAKSTFFVCLNLSLLFSLVTATYYSSLTPTLLGFREEQFTHLHFFFHDVVTGPKPSMVFIAEPNGKAKDALPFGTVVAMDDPLTVGPEQDSKLVGKAQGIYTSISQEEMGLMMVMTMAFTDGDFNGSTISVLGRNMIMSEPVREMAIVGGTGAFRFARGYAQARFYSVDFTKGDAIVEYDVFVNHY.

Residues 1–21 (MAKSTFFVCLNLSLLFSLVTA) form the signal peptide. N-linked (GlcNAc...) asparagine glycosylation is present at asparagine 125.

The protein belongs to the plant dirigent protein family. Homodimer.

Its subcellular location is the secreted. It localises to the extracellular space. The protein resides in the apoplast. The catalysed reaction is a (4R)-4,2'-dihydroxyisoflavan = a pterocarpan + H2O.. It carries out the reaction (3R,4R)-7,2'-dihydroxy-4'-methoxyisoflavanol = (-)-medicarpin + H2O. The enzyme catalyses (3R,4R)-3-(6-hydroxy-1,3-benzodioxol-5-yl)-3,4-dihydro-2H-chromene-4,7-diol = (-)-maackiain + H2O. It catalyses the reaction (3S,4R)-7,2'-dihydroxy-4'-methoxyisoflavanol = (+)-medicarpin + H2O. The catalysed reaction is (3R,4R)-7,2',4'-trihydroxyisoflavanol = (6aR,11aR)-3,9-dihydroxypterocarpan + H2O. Its function is as follows. Involved in pterocarpan phytoalexin biosynthesis. Catalyzes the last step in the biosynthesis of the phytoalexin medicarpin, and thereby contributes to plant defense reactions. Dirigent proteins impart stereoselectivity on the phenoxy radical-coupling reaction, yielding optically active lignans from two molecules of coniferyl alcohol in the biosynthesis of lignans, flavonolignans, and alkaloids and thus plays a central role in plant secondary metabolism. The polypeptide is Pterocarpan synthase 1 (Glycine max (Soybean)).